An 88-amino-acid chain; its full sequence is MVKLRLKRCGRKQRAIYRIVAIDVRSRREGRDLRKVGFYDPINNQTYLNVPLILYFLEKGAQPTGTVYDILKKAEVFKELQINQKKSN.

It belongs to the bacterial ribosomal protein bS16 family.

It localises to the plastid. It is found in the chloroplast. This Calycanthus floridus var. glaucus (Eastern sweetshrub) protein is Small ribosomal subunit protein bS16c.